Reading from the N-terminus, the 387-residue chain is Putative transmembrane protein At3g54730 (387 aa).

Positions 10–25 (PAPPLLLPSPNPPPCA) are enriched in pro residues. A disordered region spans residues 10–45 (PAPPLLLPSPNPPPCALPQDLTSLVSPSEPPDPPDP). 8 helical membrane-spanning segments follow: residues 97 to 117 (VFPL…HPLV), 128 to 148 (GSNF…ILQF), 154 to 174 (VMIS…MILL), 186 to 206 (VLFS…VGLI), 221 to 241 (IQKL…FLEI), 292 to 312 (SWCF…YPLE), 335 to 355 (FSTI…FIFF), and 362 to 382 (PFVA…LNHF).

The protein resides in the membrane. This is Putative transmembrane protein At3g54730 from Arabidopsis thaliana (Mouse-ear cress).